A 564-amino-acid chain; its full sequence is Glutamate--tRNA ligase (564 aa).

The 'HIGH' region signature appears at 107 to 117 (PNPNGPPTLGS).

The protein belongs to the class-I aminoacyl-tRNA synthetase family. Glutamate--tRNA ligase type 2 subfamily.

The protein localises to the cytoplasm. The enzyme catalyses tRNA(Glu) + L-glutamate + ATP = L-glutamyl-tRNA(Glu) + AMP + diphosphate. Functionally, catalyzes the attachment of glutamate to tRNA(Glu) in a two-step reaction: glutamate is first activated by ATP to form Glu-AMP and then transferred to the acceptor end of tRNA(Glu). This is Glutamate--tRNA ligase from Methanothrix thermoacetophila (strain DSM 6194 / JCM 14653 / NBRC 101360 / PT) (Methanosaeta thermophila).